The following is a 921-amino-acid chain: Isoleucine--tRNA ligase (921 aa).

The short motif at 57–67 is the 'HIGH' region element; sequence PYANGDIHMGH. Glu-552 is an L-isoleucyl-5'-AMP binding site. The short motif at 593–597 is the 'KMSKS' region element; that stretch reads KMSKS. Lys-596 provides a ligand contact to ATP. Cys-888, Cys-891, Cys-908, and Cys-911 together coordinate Zn(2+).

The protein belongs to the class-I aminoacyl-tRNA synthetase family. IleS type 1 subfamily. In terms of assembly, monomer. Zn(2+) serves as cofactor.

The protein localises to the cytoplasm. It catalyses the reaction tRNA(Ile) + L-isoleucine + ATP = L-isoleucyl-tRNA(Ile) + AMP + diphosphate. In terms of biological role, catalyzes the attachment of isoleucine to tRNA(Ile). As IleRS can inadvertently accommodate and process structurally similar amino acids such as valine, to avoid such errors it has two additional distinct tRNA(Ile)-dependent editing activities. One activity is designated as 'pretransfer' editing and involves the hydrolysis of activated Val-AMP. The other activity is designated 'posttransfer' editing and involves deacylation of mischarged Val-tRNA(Ile). The chain is Isoleucine--tRNA ligase from Bacillus cereus (strain 03BB102).